The following is a 638-amino-acid chain: Growth hormone receptor (638 aa).

The N-terminal stretch at 1-18 (MDLWQLLLTLALAGSSDA) is a signal peptide. Topologically, residues 19-264 (FSGSEATAAI…SQFTCEEDFY (246 aa)) are extracellular. Residue Asn46 is glycosylated (N-linked (GlcNAc...) asparagine). Cystine bridges form between Cys56–Cys66 and Cys101–Cys112. An N-linked (GlcNAc...) asparagine glycan is attached at Asn115. A disulfide bridge connects residues Cys126 and Cys140. The 104-residue stretch at 151-254 (PPIALNWTLL…EVLYVTLPQM (104 aa)) folds into the Fibronectin type-III domain. N-linked (GlcNAc...) asparagine glycans are attached at residues Asn156, Asn161, and Asn200. The WSXWS motif motif lies at 240–244 (YGEFS). The required for ADAM17-mediated proteolysis stretch occupies residues 260 to 262 (EED). The helical transmembrane segment at 265–288 (FPWLLIIIFGIFGLTVMLFVFLFS) threads the bilayer. At 289–638 (KQQRIKMLIL…STDQLNKIMP (350 aa)) the chain is on the cytoplasmic side. The tract at residues 294 to 379 (KMLILPPVPV…HEKSHSNLGV (86 aa)) is required for JAK2 binding. Positions 297 to 305 (ILPPVPVPK) match the Box 1 motif motif. The UbE motif motif lies at 340-349 (DSWVEFIELD). Ser341 is modified (phosphoserine). A disordered region spans residues 353-391 (PDEKTEESDTDRLLSSDHEKSHSNLGVKDGDSGRTSCCE). The span at 362–384 (TDRLLSSDHEKSHSNLGVKDGDS) shows a compositional bias: basic and acidic residues. Phosphotyrosine; by JAK2 is present on residues Tyr487 and Tyr595.

This sequence belongs to the type I cytokine receptor family. Type 1 subfamily. In terms of assembly, on growth hormone (GH) binding, forms homodimers and binds JAK2 via a box 1-containing domain. In terms of processing, the soluble form (GHBP) is produced by phorbol ester-promoted proteolytic cleavage at the cell surface (shedding) by ADAM17/TACE. Shedding is inhibited by growth hormone (GH) binding to the receptor probably due to a conformational change in GHR rendering the receptor inaccessible to ADAM17. Post-translationally, on GH binding, phosphorylated on tyrosine residues in the cytoplasmic domain by JAK2. Ubiquitinated by the ECS(SOCS2) complex following ligand-binding and phosphorylation by JAK2, leading to its degradation by the proteasome. Regulation by the ECS(SOCS2) complex acts as a negative feedback loop of growth hormone receptor signaling. Ubiquitination is not sufficient for GHR internalization. As to expression, expressed in various tissues with high expression in liver and skeletal muscle. In terms of tissue distribution, isoform 2 is expressed in lung, stomach and muscle. Predominantly expressed in kidney, bladder, adrenal gland and brain stem. Highly expressed in placental villi.

The protein resides in the cell membrane. Its subcellular location is the secreted. In terms of biological role, receptor for pituitary gland growth hormone (GH1) involved in regulating postnatal body growth. On ligand binding, couples to the JAK2/STAT5 pathway. Its function is as follows. The soluble form (GHBP) acts as a reservoir of growth hormone in plasma and may be a modulator/inhibitor of GH signaling. Functionally, up-regulates the production of the soluble Growth hormone-binding protein form (GHBP) and acts as a negative inhibitor of growth hormone signaling. The chain is Growth hormone receptor (GHR) from Homo sapiens (Human).